The sequence spans 377 residues: 3-dehydroquinate synthase (377 aa).

NAD(+)-binding positions include 113 to 117 (GVIGD), 137 to 138 (TT), Lys150, Lys159, and 177 to 180 (FLDT). 3 residues coordinate Zn(2+): Glu192, His254, and His273.

It belongs to the sugar phosphate cyclases superfamily. Dehydroquinate synthase family. Requires Co(2+) as cofactor. Zn(2+) is required as a cofactor. The cofactor is NAD(+).

It localises to the cytoplasm. The enzyme catalyses 7-phospho-2-dehydro-3-deoxy-D-arabino-heptonate = 3-dehydroquinate + phosphate. Its pathway is metabolic intermediate biosynthesis; chorismate biosynthesis; chorismate from D-erythrose 4-phosphate and phosphoenolpyruvate: step 2/7. Its function is as follows. Catalyzes the conversion of 3-deoxy-D-arabino-heptulosonate 7-phosphate (DAHP) to dehydroquinate (DHQ). The chain is 3-dehydroquinate synthase from Bartonella quintana (strain Toulouse) (Rochalimaea quintana).